Here is a 246-residue protein sequence, read N- to C-terminus: 3'(2'),5'-bisphosphate nucleotidase CysQ (246 aa).

Residues E64, D83, L85, D86, and D205 each coordinate Mg(2+). E64 contributes to the substrate binding site. Residues L85–T88 and D205 each bind substrate.

The protein belongs to the inositol monophosphatase superfamily. CysQ family. Mg(2+) is required as a cofactor.

Its subcellular location is the cell inner membrane. The enzyme catalyses adenosine 3',5'-bisphosphate + H2O = AMP + phosphate. Converts adenosine-3',5'-bisphosphate (PAP) to AMP. This chain is 3'(2'),5'-bisphosphate nucleotidase CysQ, found in Escherichia coli O6:H1 (strain CFT073 / ATCC 700928 / UPEC).